Consider the following 725-residue polypeptide: Prolyl 3-hydroxylase 1 (725 aa).

The signal sequence occupies residues 1-14; that stretch reads MALLLPLLPLLVWA. The TPR 1 repeat unit spans residues 36 to 69; it reads PDALFAAGAEAYARGDWPAVVLQMERALRARAAI. N-linked (GlcNAc...) asparagine glycosylation occurs at N82. TPR repeat units follow at residues 136 to 169, 198 to 231, and 294 to 327; these read RSPYNYLQVAYFKINKVAKAVAAAHTFFVANPEH, HMTEFRLGVRFYSEEQPAAAVLHLEKALQEYFVA, and PSHFNYLQFAYYNNGNYEKAIECAKTYLLFFPND. Residues 394–441 are a coiled coil; it reads KRLREKQKVERETAARISEEIGNLMKEIETLVEEKAKESAEMSKFIRE. 2 N-linked (GlcNAc...) asparagine glycosylation sites follow: N460 and N533. The Fe2OG dioxygenase domain maps to 557 to 671; the sequence is SHLVCRTAID…RCAIALWFTL (115 aa). Residues H580, D582, and H652 each coordinate Fe cation. R662 is a catalytic residue. Residues 701–715 show a composition bias toward polar residues; that stretch reads ETSAEQEPTAATSTA. Positions 701–725 are disordered; sequence ETSAEQEPTAATSTAGLHAAGKDEL. Residues 722–725 carry the Prevents secretion from ER motif; it reads KDEL.

Belongs to the leprecan family. As to quaternary structure, binds unfolded collagen in a complex with CYPB and CRTAP. It depends on Fe cation as a cofactor. The cofactor is L-ascorbate. Expressed in embryonic dermis, tendon, cartilage, liver and kidney. Expression in the kidney is restricted to the calyx. In the liver, expression is restricted to the interlobular septum.

It is found in the endoplasmic reticulum. The enzyme catalyses L-prolyl-[collagen] + 2-oxoglutarate + O2 = trans-3-hydroxy-L-prolyl-[collagen] + succinate + CO2. Functionally, has prolyl 3-hydroxylase activity catalyzing the post-translational formation of 3-hydroxyproline in -Xaa-Pro-Gly-sequences in collagens, especially types IV and V. May be involved in the secretoty pathway of cells. Has growth suppressive activity in fibroblasts. This chain is Prolyl 3-hydroxylase 1, found in Gallus gallus (Chicken).